A 407-amino-acid chain; its full sequence is uncharacterized protein (407 aa).

Disordered stretches follow at residues 1-64, 110-276, and 314-341; these read MSRK…EPFD, GFGP…YPQF, and QSRP…HNNP. Residues 7–32 are compositionally biased toward polar residues; it reads KQSNPKRNYKNDNYFQENSYTMTNGF. Basic and acidic residues predominate over residues 33-44; sequence TKDKDGKPVEFK. The segment covering 122–137 has biased composition (acidic residues); sequence DSDSEYSDECLTDECS. Composition is skewed to polar residues over residues 138–147 and 184–201; these read DNYNKQSTDS and NFDN…NSQP. Over residues 209–231 the composition is skewed to low complexity; that stretch reads SKSSSKSSKSNKSNKSSKSNKSS. The span at 232–246 shows a compositional bias: basic residues; the sequence is KSSKSKSNKHSKHKN. The segment covering 247 to 258 has biased composition (basic and acidic residues); it reads KSDSSSDSDEKT. 2 stretches are compositionally biased toward basic residues: residues 259 to 270 and 316 to 341; these read HKHKDRRHRRGR and RPRK…HNNP.

This is an uncharacterized protein from Acanthamoeba polyphaga mimivirus (APMV).